A 127-amino-acid polypeptide reads, in one-letter code: MFRTLLKSKIHRAAVTHCELNYEGSCAIDEDLLDAANLGENEQIHIWNINNGERFITYAIRAERGSRIISVNGSAARRAAVGDLVIIAAFAQVEEKEVAGFSPKLVFVNPDNRIKEERSTIPVQMAD.

Ser-25 functions as the Schiff-base intermediate with substrate; via pyruvic acid in the catalytic mechanism. Ser-25 is subject to Pyruvic acid (Ser). Thr-57 is a substrate binding site. Tyr-58 (proton donor) is an active-site residue. Substrate is bound at residue Gly-73–Ala-75.

This sequence belongs to the PanD family. Heterooctamer of four alpha and four beta subunits. Requires pyruvate as cofactor. Post-translationally, is synthesized initially as an inactive proenzyme, which is activated by self-cleavage at a specific serine bond to produce a beta-subunit with a hydroxyl group at its C-terminus and an alpha-subunit with a pyruvoyl group at its N-terminus.

The protein resides in the cytoplasm. The catalysed reaction is L-aspartate + H(+) = beta-alanine + CO2. Its pathway is cofactor biosynthesis; (R)-pantothenate biosynthesis; beta-alanine from L-aspartate: step 1/1. In terms of biological role, catalyzes the pyruvoyl-dependent decarboxylation of aspartate to produce beta-alanine. The polypeptide is Aspartate 1-decarboxylase (Polaromonas naphthalenivorans (strain CJ2)).